The following is a 90-amino-acid chain: MSRTIFCTFLKKDAEGQDFQLYPGEIGKRIYNEISKEAWSQWITKQTMLINEKKLSMMNIEDRKLLEQEMVNFLFEGQDVHIAGYTPPSK.

It belongs to the Fe(2+)-trafficking protein family. In terms of assembly, monomer.

Could be a mediator in iron transactions between iron acquisition and iron-requiring processes, such as synthesis and/or repair of Fe-S clusters in biosynthetic enzymes. This is Probable Fe(2+)-trafficking protein from Yersinia pseudotuberculosis serotype O:1b (strain IP 31758).